The chain runs to 202 residues: Urease accessory protein UreE (202 aa).

A compositionally biased stretch (basic and acidic residues) spans 171–188; it reads HHGHSHSHDHDHDHDHQH. A disordered region spans residues 171-202; sequence HHGHSHSHDHDHDHDHQHGPGCTHGHRGHDHH.

This sequence belongs to the UreE family.

The protein resides in the cytoplasm. Involved in urease metallocenter assembly. Binds nickel. Probably functions as a nickel donor during metallocenter assembly. This Burkholderia ambifaria (strain ATCC BAA-244 / DSM 16087 / CCUG 44356 / LMG 19182 / AMMD) (Burkholderia cepacia (strain AMMD)) protein is Urease accessory protein UreE.